The chain runs to 373 residues: Queuine tRNA-ribosyltransferase (373 aa).

Aspartate 93 (proton acceptor) is an active-site residue. Residues aspartate 93 to phenylalanine 97, aspartate 147, glutamine 189, and glycine 216 contribute to the substrate site. The tract at residues glycine 247–aspartate 253 is RNA binding. Aspartate 266 (nucleophile) is an active-site residue. An RNA binding; important for wobble base 34 recognition region spans residues threonine 271–arginine 275. Zn(2+)-binding residues include cysteine 304, cysteine 306, cysteine 309, and histidine 335.

Belongs to the queuine tRNA-ribosyltransferase family. Homodimer. Within each dimer, one monomer is responsible for RNA recognition and catalysis, while the other monomer binds to the replacement base PreQ1. It depends on Zn(2+) as a cofactor.

The enzyme catalyses 7-aminomethyl-7-carbaguanine + guanosine(34) in tRNA = 7-aminomethyl-7-carbaguanosine(34) in tRNA + guanine. It functions in the pathway tRNA modification; tRNA-queuosine biosynthesis. Its function is as follows. Catalyzes the base-exchange of a guanine (G) residue with the queuine precursor 7-aminomethyl-7-deazaguanine (PreQ1) at position 34 (anticodon wobble position) in tRNAs with GU(N) anticodons (tRNA-Asp, -Asn, -His and -Tyr). Catalysis occurs through a double-displacement mechanism. The nucleophile active site attacks the C1' of nucleotide 34 to detach the guanine base from the RNA, forming a covalent enzyme-RNA intermediate. The proton acceptor active site deprotonates the incoming PreQ1, allowing a nucleophilic attack on the C1' of the ribose to form the product. After dissociation, two additional enzymatic reactions on the tRNA convert PreQ1 to queuine (Q), resulting in the hypermodified nucleoside queuosine (7-(((4,5-cis-dihydroxy-2-cyclopenten-1-yl)amino)methyl)-7-deazaguanosine). This Halothermothrix orenii (strain H 168 / OCM 544 / DSM 9562) protein is Queuine tRNA-ribosyltransferase.